Reading from the N-terminus, the 122-residue chain is uncharacterized protein (122 aa).

This is an uncharacterized protein from Saccharomyces cerevisiae (strain ATCC 204508 / S288c) (Baker's yeast).